A 156-amino-acid polypeptide reads, in one-letter code: Ribosomal RNA large subunit methyltransferase H (156 aa).

S-adenosyl-L-methionine is bound by residues Leu-72, Gly-104, and 123-128 (LGPMTF).

It belongs to the RNA methyltransferase RlmH family. In terms of assembly, homodimer.

It is found in the cytoplasm. The catalysed reaction is pseudouridine(1915) in 23S rRNA + S-adenosyl-L-methionine = N(3)-methylpseudouridine(1915) in 23S rRNA + S-adenosyl-L-homocysteine + H(+). Specifically methylates the pseudouridine at position 1915 (m3Psi1915) in 23S rRNA. The sequence is that of Ribosomal RNA large subunit methyltransferase H from Nitratidesulfovibrio vulgaris (strain ATCC 29579 / DSM 644 / CCUG 34227 / NCIMB 8303 / VKM B-1760 / Hildenborough) (Desulfovibrio vulgaris).